The chain runs to 293 residues: Ethanolamine ammonia-lyase small subunit (293 aa).

The adenosylcob(III)alamin site is built by Val-207 and Glu-228.

Belongs to the EutC family. The basic unit is a heterodimer which dimerizes to form tetramers. The heterotetramers trimerize; 6 large subunits form a core ring with 6 small subunits projecting outwards. Requires adenosylcob(III)alamin as cofactor.

The protein resides in the bacterial microcompartment. It catalyses the reaction ethanolamine = acetaldehyde + NH4(+). It participates in amine and polyamine degradation; ethanolamine degradation. In terms of biological role, catalyzes the deamination of various vicinal amino-alcohols to oxo compounds. Allows this organism to utilize ethanolamine as the sole source of nitrogen and carbon in the presence of external vitamin B12. This Clostridioides difficile (strain 630) (Peptoclostridium difficile) protein is Ethanolamine ammonia-lyase small subunit.